We begin with the raw amino-acid sequence, 861 residues long: Extra-large guanine nucleotide-binding protein 2 (861 aa).

Disordered stretches follow at residues 1 to 32 and 121 to 168; these read MAAVIRKLLPFPSPNPKRDNRESDDDDETSSG and VSGS…DDRV. A compositionally biased stretch (basic and acidic residues) spans 131-143; sequence KRLDVPEEVKSPA. Positions 146–156 are enriched in low complexity; the sequence is RLSPSSPLSAS. Basic and acidic residues predominate over residues 157–168; that stretch reads AREEDHLDDDRV. The Nuclear localization signal signature appears at 204 to 211; sequence RAERKGKR. Residues 214 to 257 form an RING-type; degenerate zinc finger; the sequence is CYRCQLGNRFTEKEVCIVCDAKYCFNCVRRAMGAMPEGRKCQAC. Residues 461–853 form the G-alpha domain; sequence MLNKLLLIGS…TSMFQEMSTT (393 aa). A G1 motif region spans residues 464-477; that stretch reads KLLLIGSEKGGATT. A GTP-binding site is contributed by 469–477; the sequence is GSEKGGATT. Position 476 (threonine 476) interacts with Ca(2+). Residues 523-545 form a disordered region; it reads EMSNDQSSGNVGDETSAKPGNSI. 624-632 provides a ligand contact to GTP; it reads DILQAEGLS. Residues 624–632 are G2 motif; it reads DILQAEGLS. Serine 632 lines the Ca(2+) pocket. The G3 motif stretch occupies residues 665–674; that stretch reads YQLIRLNPRS. The interval 737–744 is G4 motif; the sequence is LLVLTKFD. 741-744 is a GTP binding site; the sequence is TKFD. A G5 motif region spans residues 818-823; the sequence is QVSLES.

Belongs to the G-alpha family. XLG subfamily. Interacts with GB1. Component of a G-protein complex at least composed of XLG2 and GB1. Interacts with RTV1. The cofactor is Ca(2+). In terms of tissue distribution, ubiquitous. Strongly expressed in vascular tissues, root and shoot meristems and lateral root primordia.

It localises to the nucleus. In terms of biological role, guanine nucleotide-binding proteins (G proteins) are involved as modulators or transducers in various transmembrane signaling systems. Binds GTP with specificity. Plays a role in the root morphogenesis by regulation of the cell proliferation. Acts as a positive regulator in resistance to pathogen that triggers the salicylic acid (SA) pathway. Promotes the DNA binding activity of RTV1 specifically to promoter regions of FT and SOC1 in vivo leading to the activation of floral integrator genes. This chain is Extra-large guanine nucleotide-binding protein 2 (XLG2), found in Arabidopsis thaliana (Mouse-ear cress).